Consider the following 276-residue polypeptide: Adenylate kinase (276 aa).

52–57 (GAGKGT) serves as a coordination point for ATP. The interval 72–101 (ATGDMLRAQVAAKTPLGREAKKIMDAGGLV) is NMP. AMP is bound by residues T73, R78, 99 to 101 (GLV), 128 to 131 (GFPR), and Q135. Residues 169-206 (GRLVHPASGRSYHKIFNPPKAPMTDDVTGEPLIQRSDD) are LID. Residues R170 and 179-180 (SY) each bind ATP. AMP-binding residues include R203 and R214. An ATP-binding site is contributed by Q242.

Belongs to the adenylate kinase family. AK2 subfamily. As to quaternary structure, monomer.

It is found in the cytoplasm. The protein localises to the cytosol. The protein resides in the mitochondrion intermembrane space. It catalyses the reaction AMP + ATP = 2 ADP. In terms of biological role, catalyzes the reversible transfer of the terminal phosphate group between ATP and AMP. Plays an important role in cellular energy homeostasis and in adenine nucleotide metabolism. Adenylate kinase activity is critical for regulation of the phosphate utilization and the AMP de novo biosynthesis pathways. This Pyrenophora tritici-repentis (strain Pt-1C-BFP) (Wheat tan spot fungus) protein is Adenylate kinase (adk1).